A 462-amino-acid chain; its full sequence is General transcription factor IIH subunit 4 (462 aa).

This sequence belongs to the TFB2 family. In terms of assembly, component of the 7-subunit TFIIH core complex composed of XPB/ERCC3, XPD/ERCC2, GTF2H1, GTF2H2, GTF2H3, GTF2H4 and GTF2H5, which is active in NER. The core complex associates with the 3-subunit CDK-activating kinase (CAK) module composed of CCNH/cyclin H, CDK7 and MNAT1 to form the 10-subunit holoenzyme (holo-TFIIH) active in transcription. Part of TBP-based Pol II pre-initiation complex (PIC), in which Pol II core assembles with general transcription factors and other specific initiation factors including GTF2E1, GTF2E2, GTF2F1, GTF2F2, TCEA1, ERCC2, ERCC3, GTF2H2, GTF2H3, GTF2H4, GTF2H5, GTF2A1, GTF2A2, GTF2B and TBP; this large multi-subunit PIC complex mediates DNA unwinding and targets Pol II core to the transcription start site where the first phosphodiester bond forms.

It localises to the nucleus. Component of the general transcription and DNA repair factor IIH (TFIIH) core complex, which is involved in general and transcription-coupled nucleotide excision repair (NER) of damaged DNA and, when complexed to CAK, in RNA transcription by RNA polymerase II. In NER, TFIIH acts by opening DNA around the lesion to allow the excision of the damaged oligonucleotide and its replacement by a new DNA fragment. In transcription, TFIIH has an essential role in transcription initiation. When the pre-initiation complex (PIC) has been established, TFIIH is required for promoter opening and promoter escape. Phosphorylation of the C-terminal tail (CTD) of the largest subunit of RNA polymerase II by the kinase module CAK controls the initiation of transcription. Its function is as follows. Stimulates the ATPase activity of TFIIH subunit XPB/ERCC3. The sequence is that of General transcription factor IIH subunit 4 (GTF2H4) from Homo sapiens (Human).